Here is a 215-residue protein sequence, read N- to C-terminus: Uracil-DNA glycosylase (215 aa).

Asp59 acts as the Proton acceptor in catalysis.

The protein belongs to the uracil-DNA glycosylase (UDG) superfamily. UNG family.

The protein resides in the cytoplasm. The catalysed reaction is Hydrolyzes single-stranded DNA or mismatched double-stranded DNA and polynucleotides, releasing free uracil.. Functionally, excises uracil residues from the DNA which can arise as a result of misincorporation of dUMP residues by DNA polymerase or due to deamination of cytosine. This is Uracil-DNA glycosylase from Aliarcobacter butzleri (strain RM4018) (Arcobacter butzleri).